Reading from the N-terminus, the 52-residue chain is Conotoxin Ac4.3a (52 aa).

Positions 1–11 are excised as a propeptide; it reads SDFRNAAVHER. Gln12 carries the pyrrolidone carboxylic acid modification. A 4-carboxyglutamate modification is found at Glu14. Thr18 and Thr20 each carry an O-linked (HexNAc...) threonine glycan. 4-hydroxyproline is present on residues Pro28, Pro33, and Pro47. Position 47 is a proline amide (Pro47). Positions 48-52 are excised as a propeptide; that stretch reads GRRND.

The protein belongs to the conotoxin A superfamily. Post-translationally, contains 3 disulfide bonds. Expressed by the venom duct.

It is found in the secreted. In terms of biological role, probable neurotoxin with ion channel inhibitor activity. The polypeptide is Conotoxin Ac4.3a (Conus achatinus (Little frog cone)).